A 59-amino-acid chain; its full sequence is Gallinacin-14 (59 aa).

An N-terminal signal peptide occupies residues 1 to 18 (MGIFLLFLVLLAVPQAAP). Disulfide bonds link Cys25/Cys54, Cys32/Cys47, and Cys37/Cys55.

It belongs to the beta-defensin family.

Its subcellular location is the secreted. It localises to the cytoplasmic granule. Its function is as follows. Has bactericidal activity. The polypeptide is Gallinacin-14 (GAL14) (Gallus gallus (Chicken)).